Consider the following 141-residue polypeptide: Cystatin-13 (141 aa).

The signal sequence occupies residues 1–24; it reads MARFLQTLLFLVIMVEFVSRRVEA. Residues 76-80 are secondary area of contact; sequence QITDS. Intrachain disulfides connect Cys94–Cys104 and Cys118–Cys138.

It belongs to the cystatin family. In terms of tissue distribution, expressed exclusively in testis. Found in spermatagonia, spermatocytes, round spermatids, elongating spermatids and spermatozoa.

Its subcellular location is the secreted. The protein resides in the cytoplasm. Its function is as follows. May perform a specialized role during sperm development and maturation. This Mus musculus (Mouse) protein is Cystatin-13.